The following is a 214-amino-acid chain: Killer cell lectin-like receptor subfamily B member 1 (214 aa).

The Cytoplasmic portion of the chain corresponds to 1–42; sequence MDAPVLYAELHLANTQGLRCTSPPSPRQDACWGSGWHRVALK. A helical; Signal-anchor for type II membrane protein membrane pass occupies residues 43 to 63; it reads LGCVGLILLLMGLSVLVGFLV. Residues 64–214 are Extracellular-facing; the sequence is QKPPIEKCSV…WICQKTLKRV (151 aa). In terms of domain architecture, C-type lectin spans 98 to 208; sequence HWNKCLFISQ…CSSDNHWICQ (111 aa). Cystine bridges form between C119–C207 and C186–C199.

It localises to the membrane. This is Killer cell lectin-like receptor subfamily B member 1 (Klrb1) from Rattus norvegicus (Rat).